The chain runs to 625 residues: Voltage-gated potassium channel KCNC4 (625 aa).

2 disordered regions span residues 1–24 (MISS…SKTC) and 65–86 (LADP…SSGS). Positions 1–28 (MISSVCVSSYRGRKSGNKPPSKTCLKEE) are inactivation gate. Residues 1 to 227 (MISSVCVSSY…EDPYSSRAAR (227 aa)) are Cytoplasmic-facing. Phosphoserine is present on residues S8, S9, S15, and S21. Residues 77-86 (DGGGAGSSGS) are compositionally biased toward gly residues. 4 residues coordinate Zn(2+): H117, C123, C144, and C145. The chain crosses the membrane as a helical span at residues 228 to 248 (VVAFASLFFILVSITTFCLET). 2 N-linked (GlcNAc...) asparagine glycosylation sites follow: N257 and N266. Residues 279 to 299 (EPILTYIEGVCVMWFTLEFLV) form a helical membrane-spanning segment. Residues 300–313 (RIVCCPDTLDFVKN) are Cytoplasmic-facing. The chain crosses the membrane as a helical span at residues 314–334 (LLNIIDFVAILPFYLEVGLSG). A helical; Voltage-sensor membrane pass occupies residues 346–365 (FLRVVRFVRILRIFKLTRHF). Topologically, residues 366–381 (VGLRVLGHTLRASTNE) are cytoplasmic. The helical transmembrane segment at 382–402 (FLLLIIFLALGVLIFATMIYY) threads the bilayer. Residues T437, L438, G439, and Y440 each coordinate K(+). The Selectivity filter signature appears at 437-442 (TLGYGD). A helical transmembrane segment spans residues 453-473 (VGALCALAGVLTIAMPVPVIV). Residues 474 to 625 (NNFGMYYSLA…CVPVSHTCAL (152 aa)) are Cytoplasmic-facing. The interval 490–581 (PKKRKKHVPR…RRALRRSGTR (92 aa)) is disordered. Residues 528-543 (AREEGMVERKRADSKQ) show a composition bias toward basic and acidic residues.

The protein belongs to the potassium channel family. C (Shaw) (TC 1.A.1.2) subfamily. Kv3.4/KCNC4 sub-subfamily. Homotetramer. Heterotetramer of potassium channel proteins. Post-translationally, phosphorylation of serine residues in the inactivation gate inhibits rapid channel closure.

Its subcellular location is the membrane. The enzyme catalyses K(+)(in) = K(+)(out). Functionally, voltage-gated potassium channel that opens in response to the voltage difference across the membrane, forming a potassium-selective channel through which potassium ions pass in accordance with their electrochemical gradient. The channel displays rapid activation and inactivation kinetics. This Rattus norvegicus (Rat) protein is Voltage-gated potassium channel KCNC4.